The sequence spans 448 residues: tRNA(Ile)-lysidine synthase (448 aa).

Position 29 to 34 (serine 29 to serine 34) interacts with ATP.

The protein belongs to the tRNA(Ile)-lysidine synthase family.

The protein localises to the cytoplasm. The catalysed reaction is cytidine(34) in tRNA(Ile2) + L-lysine + ATP = lysidine(34) in tRNA(Ile2) + AMP + diphosphate + H(+). In terms of biological role, ligates lysine onto the cytidine present at position 34 of the AUA codon-specific tRNA(Ile) that contains the anticodon CAU, in an ATP-dependent manner. Cytidine is converted to lysidine, thus changing the amino acid specificity of the tRNA from methionine to isoleucine. This chain is tRNA(Ile)-lysidine synthase, found in Azoarcus sp. (strain BH72).